The primary structure comprises 356 residues: Ubiquitin-conjugating enzyme E2 Z (356 aa).

Residues 1 to 16 (MAESPTEEAATATAGA) show a composition bias toward low complexity. A disordered region spans residues 1–22 (MAESPTEEAATATAGAGAAGPG). A UBC core domain is found at 101-255 (QCLLRIKRDI…IRHETIRVAV (155 aa)). Cys-190 serves as the catalytic Glycyl thioester intermediate. The tract at residues 334–356 (NAEMDSDSSSSGTETDLHGSLRV) is disordered. Ser-339 is modified (phosphoserine).

It belongs to the ubiquitin-conjugating enzyme family.

The protein localises to the cytoplasm. The protein resides in the nucleus. The catalysed reaction is S-ubiquitinyl-[E1 ubiquitin-activating enzyme]-L-cysteine + [E2 ubiquitin-conjugating enzyme]-L-cysteine = [E1 ubiquitin-activating enzyme]-L-cysteine + S-ubiquitinyl-[E2 ubiquitin-conjugating enzyme]-L-cysteine.. It functions in the pathway protein modification; protein ubiquitination. Functionally, catalyzes the covalent attachment of ubiquitin to other proteins. Specific substrate for UBA6, not charged with ubiquitin by UBE1. May be involved in apoptosis regulation. This Rattus norvegicus (Rat) protein is Ubiquitin-conjugating enzyme E2 Z (Ube2z).